The chain runs to 522 residues: Probable cytosolic Fe-S cluster assembly factor narfl (522 aa).

Residues cysteine 26, cysteine 73, cysteine 76, cysteine 79, cysteine 205, cysteine 281, cysteine 439, and cysteine 443 each contribute to the [4Fe-4S] cluster site.

The protein belongs to the NARF family.

In terms of biological role, component of the cytosolic iron-sulfur (Fe/S) protein assembly machinery. Required for maturation of extramitochondrial Fe/S proteins. The polypeptide is Probable cytosolic Fe-S cluster assembly factor narfl (narfl) (Dictyostelium discoideum (Social amoeba)).